The chain runs to 247 residues: Protein McbF (247 aa).

An ABC transporter domain is found at 6 to 234 (LEINSLSFSY…NNETTQKRHL (229 aa)). ATP is bound at residue 40–47 (GENPAGKT).

The protein belongs to the ABC transporter superfamily.

Functionally, together with two further proteins McbE and McbG this protein causes immunity to the peptide antibiotic microcin B17, which inhibits DNA replication in enterobacteriaceae. Immunity is determined by two different mechanisms. McbE is involved in the production of extracellular MccB17 and, in a complex with mcbf it also serves as 'pump' for the export of active MccB17 from the cytoplasm to the periplasmic space. This chain is Protein McbF (mcbF), found in Escherichia coli.